The primary structure comprises 337 residues: Glycerol-3-phosphate dehydrogenase [NAD(P)+] (337 aa).

NADPH contacts are provided by S17, Y18, H38, and K112. K112, G141, and T143 together coordinate sn-glycerol 3-phosphate. A145 contacts NADPH. Sn-glycerol 3-phosphate is bound by residues K197, D250, S260, R261, and N262. Residue K197 is the Proton acceptor of the active site. NADPH is bound at residue R261. The NADPH site is built by V285 and E287.

The protein belongs to the NAD-dependent glycerol-3-phosphate dehydrogenase family.

It is found in the cytoplasm. The catalysed reaction is sn-glycerol 3-phosphate + NAD(+) = dihydroxyacetone phosphate + NADH + H(+). It carries out the reaction sn-glycerol 3-phosphate + NADP(+) = dihydroxyacetone phosphate + NADPH + H(+). It functions in the pathway membrane lipid metabolism; glycerophospholipid metabolism. Functionally, catalyzes the reduction of the glycolytic intermediate dihydroxyacetone phosphate (DHAP) to sn-glycerol 3-phosphate (G3P), the key precursor for phospholipid synthesis. The protein is Glycerol-3-phosphate dehydrogenase [NAD(P)+] of Pasteurella multocida (strain Pm70).